A 394-amino-acid chain; its full sequence is Tryptophan synthase beta chain (394 aa).

K90 is subject to N6-(pyridoxal phosphate)lysine.

This sequence belongs to the TrpB family. As to quaternary structure, tetramer of two alpha and two beta chains. Pyridoxal 5'-phosphate is required as a cofactor.

The enzyme catalyses (1S,2R)-1-C-(indol-3-yl)glycerol 3-phosphate + L-serine = D-glyceraldehyde 3-phosphate + L-tryptophan + H2O. Its pathway is amino-acid biosynthesis; L-tryptophan biosynthesis; L-tryptophan from chorismate: step 5/5. Functionally, the beta subunit is responsible for the synthesis of L-tryptophan from indole and L-serine. This is Tryptophan synthase beta chain from Parabacteroides distasonis (strain ATCC 8503 / DSM 20701 / CIP 104284 / JCM 5825 / NCTC 11152).